We begin with the raw amino-acid sequence, 679 residues long: Palmitoyltransferase ERF2 (679 aa).

Disordered stretches follow at residues 1-181 (MASK…SQMR), 194-250 (RQMS…MSSD), and 267-338 (LSNL…SQKS). Topologically, residues 1–368 (MASKPDDDGF…WQNTRGRPIN (368 aa)) are cytoplasmic. 2 stretches are compositionally biased toward polar residues: residues 44–57 (VQNN…STDM) and 66–82 (TGAS…SLRN). 2 stretches are compositionally biased toward low complexity: residues 103–114 (STSQPPSLSSRS) and 143–167 (PSTM…PTSP). The span at 291–301 (NDGQLSQNRST) shows a compositional bias: polar residues. A helical membrane pass occupies residues 369–389 (IATGIFVVVPCALFFGFEAPW). At 390–393 (LWNN) the chain is on the lumenal side. Residues 394–414 (VSPAIPIVFAYLAYICFSSFI) traverse the membrane as a helical segment. Topologically, residues 415 to 511 (HASVTDPGIL…NNCVGKRNYR (97 aa)) are cytoplasmic. Residues 468–518 (KHCRTCNIWRPPRAHHCRLCDNCIETHDHHCVWLNNCVGKRNYRYFFTFVT) form the DHHC domain. C498 (S-palmitoyl cysteine intermediate) is an active-site residue. The helical transmembrane segment at 512–532 (YFFTFVTSATVLAAYLIATSL) threads the bilayer. Topologically, residues 533–554 (TQILLYRNRQGISFGQAVDHFR) are lumenal. The helical transmembrane segment at 555–575 (VPFALVFLGFITFLYPAALMG) threads the bilayer. The Cytoplasmic segment spans residues 576–679 (YHIFLMARGE…PVSLRNDTPH (104 aa)). The disordered stretch occupies residues 640 to 679 (LGIRRDKRPRSSSQGLEMHDVNPGSSGFQGPVSLRNDTPH).

This sequence belongs to the DHHC palmitoyltransferase family. ERF2/ZDHHC9 subfamily. Post-translationally, autopalmitoylated.

It is found in the endoplasmic reticulum membrane. The enzyme catalyses L-cysteinyl-[protein] + hexadecanoyl-CoA = S-hexadecanoyl-L-cysteinyl-[protein] + CoA. Palmitoyltransferase specific for Ras proteins. The polypeptide is Palmitoyltransferase ERF2 (ERF2) (Gibberella zeae (strain ATCC MYA-4620 / CBS 123657 / FGSC 9075 / NRRL 31084 / PH-1) (Wheat head blight fungus)).